A 334-amino-acid chain; its full sequence is Adenosine deaminase (334 aa).

Zn(2+) is bound by residues histidine 12 and histidine 14. Positions 14, 16, and 170 each coordinate substrate. A Zn(2+)-binding site is contributed by histidine 197. Glutamate 200 serves as the catalytic Proton donor. Aspartate 278 contributes to the Zn(2+) binding site. A substrate-binding site is contributed by aspartate 279.

Belongs to the metallo-dependent hydrolases superfamily. Adenosine and AMP deaminases family. Adenosine deaminase subfamily. It depends on Zn(2+) as a cofactor.

It catalyses the reaction adenosine + H2O + H(+) = inosine + NH4(+). The enzyme catalyses 2'-deoxyadenosine + H2O + H(+) = 2'-deoxyinosine + NH4(+). In terms of biological role, catalyzes the hydrolytic deamination of adenosine and 2-deoxyadenosine. This is Adenosine deaminase from Vibrio parahaemolyticus serotype O3:K6 (strain RIMD 2210633).